We begin with the raw amino-acid sequence, 200 residues long: GTP cyclohydrolase 1 (200 aa).

Positions 87, 90, and 158 each coordinate Zn(2+).

This sequence belongs to the GTP cyclohydrolase I family. In terms of assembly, toroid-shaped homodecamer, composed of two pentamers of five dimers.

It carries out the reaction GTP + H2O = 7,8-dihydroneopterin 3'-triphosphate + formate + H(+). It participates in cofactor biosynthesis; 7,8-dihydroneopterin triphosphate biosynthesis; 7,8-dihydroneopterin triphosphate from GTP: step 1/1. This is GTP cyclohydrolase 1 from Xanthomonas campestris pv. campestris (strain ATCC 33913 / DSM 3586 / NCPPB 528 / LMG 568 / P 25).